A 348-amino-acid polypeptide reads, in one-letter code: Erythronate-4-phosphate dehydrogenase (348 aa).

Substrate contacts are provided by Thr-46 and Thr-67. Asp-147 lines the NAD(+) pocket. Arg-209 is a catalytic residue. Asp-233 provides a ligand contact to NAD(+). The active site involves Glu-238. The Proton donor role is filled by His-255. An NAD(+)-binding site is contributed by Gly-258. Tyr-259 is a substrate binding site.

It belongs to the D-isomer specific 2-hydroxyacid dehydrogenase family. PdxB subfamily. In terms of assembly, homodimer.

The protein resides in the cytoplasm. The catalysed reaction is 4-phospho-D-erythronate + NAD(+) = (R)-3-hydroxy-2-oxo-4-phosphooxybutanoate + NADH + H(+). It participates in cofactor biosynthesis; pyridoxine 5'-phosphate biosynthesis; pyridoxine 5'-phosphate from D-erythrose 4-phosphate: step 2/5. In terms of biological role, catalyzes the oxidation of erythronate-4-phosphate to 3-hydroxy-2-oxo-4-phosphonooxybutanoate. In Bacteroides thetaiotaomicron (strain ATCC 29148 / DSM 2079 / JCM 5827 / CCUG 10774 / NCTC 10582 / VPI-5482 / E50), this protein is Erythronate-4-phosphate dehydrogenase.